The following is a 437-amino-acid chain: Major royal jelly protein 6 (437 aa).

A signal peptide spans 1–20 (MTNWLLLIVCLSIACQDVTS). N-linked (GlcNAc...) asparagine glycans are attached at residues Asn-78, Asn-164, Asn-181, Asn-201, and Asn-324.

This sequence belongs to the major royal jelly protein family. Found in and secreted from the hypopharyngeal glands of the worker honey bee (at protein level); expression peaks at 20 days post eclosion. Expressed in the spermatheca of adult queen bees (at protein level); Expression levels are higher in mated queens than in virgin queens. Expressed at low level in the brains of adult worker bees. Protein abundance does not seem to correlate with transcript abundance.

The protein localises to the secreted. Functionally, component of royal jelly, a substance produced in the hypopharyngeal gland containing proteins, free amino acids, fatty acids, sugars and other nutrients, which is fed to developing larvae by worker nurse bees. All larvae are fed some royal jelly (also known as worker jelly) early in their development but it forms the principal source of nutrition for larvae destined to become queen bees. Produced in the spermatheca of adult queen bees, along with other major royal jelly proteins, where it may act as a nutrient supply for sperm stored by mated queens, or be involved in energy metabolism. This chain is Major royal jelly protein 6, found in Apis mellifera (Honeybee).